The following is a 340-amino-acid chain: Ketol-acid reductoisomerase (NADP(+)) (340 aa).

Positions 1 to 182 (MRVYYDRDCD…GGGRSGIIET (182 aa)) constitute a KARI N-terminal Rossmann domain. NADP(+)-binding positions include 24 to 27 (YGSQ), Arg48, Ser51, Ser53, and 83 to 86 (DELQ). Residue His108 is part of the active site. Position 134 (Gly134) interacts with NADP(+). Residues 183–329 (NFRQECETDL…EKLRGMMPWI (147 aa)) form the KARI C-terminal knotted domain. Mg(2+) is bound by residues Asp191, Glu195, Glu227, and Glu231. Ser252 contributes to the substrate binding site.

It belongs to the ketol-acid reductoisomerase family. It depends on Mg(2+) as a cofactor.

The catalysed reaction is (2R)-2,3-dihydroxy-3-methylbutanoate + NADP(+) = (2S)-2-acetolactate + NADPH + H(+). It catalyses the reaction (2R,3R)-2,3-dihydroxy-3-methylpentanoate + NADP(+) = (S)-2-ethyl-2-hydroxy-3-oxobutanoate + NADPH + H(+). It functions in the pathway amino-acid biosynthesis; L-isoleucine biosynthesis; L-isoleucine from 2-oxobutanoate: step 2/4. It participates in amino-acid biosynthesis; L-valine biosynthesis; L-valine from pyruvate: step 2/4. In terms of biological role, involved in the biosynthesis of branched-chain amino acids (BCAA). Catalyzes an alkyl-migration followed by a ketol-acid reduction of (S)-2-acetolactate (S2AL) to yield (R)-2,3-dihydroxy-isovalerate. In the isomerase reaction, S2AL is rearranged via a Mg-dependent methyl migration to produce 3-hydroxy-3-methyl-2-ketobutyrate (HMKB). In the reductase reaction, this 2-ketoacid undergoes a metal-dependent reduction by NADPH to yield (R)-2,3-dihydroxy-isovalerate. This is Ketol-acid reductoisomerase (NADP(+)) from Cereibacter sphaeroides (strain ATCC 17025 / ATH 2.4.3) (Rhodobacter sphaeroides).